The chain runs to 206 residues: MQDYKQPLRIGVGGPVGSGKTALLEVLCKTLRDTYQIAVVTNDIYTQEDAKILTQAEALAADRIIGVETGGCPHTAIREDASMNLAAVEELAQRHKNLDVVFVESGGDNLSATFSPELADLTIYVIDVAEGEKIPRKGGPGITKSDLLIINKIDLAPYVGASLEVMESDTARMRPTRPYVFTNLKEGVGLDKIIEFIVDRGMLDAK.

Residue 14–21 (GPVGSGKT) coordinates GTP.

The protein belongs to the SIMIBI class G3E GTPase family. UreG subfamily. In terms of assembly, homodimer. UreD, UreF and UreG form a complex that acts as a GTP-hydrolysis-dependent molecular chaperone, activating the urease apoprotein by helping to assemble the nickel containing metallocenter of UreC. The UreE protein probably delivers the nickel.

Its subcellular location is the cytoplasm. Its function is as follows. Facilitates the functional incorporation of the urease nickel metallocenter. This process requires GTP hydrolysis, probably effectuated by UreG. This is Urease accessory protein UreG from Aliivibrio fischeri (strain ATCC 700601 / ES114) (Vibrio fischeri).